We begin with the raw amino-acid sequence, 314 residues long: uncharacterized protein (314 aa).

2 consecutive transmembrane segments (helical) span residues 23-43 (LALG…MALF) and 98-118 (MASG…GPLT). The span at 165–184 (GLGSGAGGGDVGGGGAGGTT) shows a compositional bias: gly residues. The interval 165–314 (GLGSGAGGGD…APDEKTDAGE (150 aa)) is disordered. Positions 190-202 (GPPPVPTSSPPTT) are enriched in pro residues. 2 stretches are compositionally biased toward low complexity: residues 203 to 212 (PAGAPTKSAT) and 219 to 232 (ASPA…AGMP). The chain crosses the membrane as a helical span at residues 221-241 (PASAHMGAAGMPMVPPGAMGA). The segment covering 294–314 (LLPEHKDFGRIAPDEKTDAGE) has biased composition (basic and acidic residues).

Its subcellular location is the cell membrane. This is an uncharacterized protein from Mycobacterium tuberculosis (strain CDC 1551 / Oshkosh).